A 365-amino-acid chain; its full sequence is 3-dehydroquinate synthase (365 aa).

NAD(+) contacts are provided by residues 106-110 (GVIGD), 130-131 (TT), lysine 142, lysine 151, and 169-172 (FFAT). Zn(2+)-binding residues include glutamate 184, histidine 247, and histidine 264.

The protein belongs to the sugar phosphate cyclases superfamily. Dehydroquinate synthase family. It depends on NAD(+) as a cofactor. Co(2+) serves as cofactor. Zn(2+) is required as a cofactor.

Its subcellular location is the cytoplasm. The catalysed reaction is 7-phospho-2-dehydro-3-deoxy-D-arabino-heptonate = 3-dehydroquinate + phosphate. Its pathway is metabolic intermediate biosynthesis; chorismate biosynthesis; chorismate from D-erythrose 4-phosphate and phosphoenolpyruvate: step 2/7. Its function is as follows. Catalyzes the conversion of 3-deoxy-D-arabino-heptulosonate 7-phosphate (DAHP) to dehydroquinate (DHQ). This is 3-dehydroquinate synthase from Listeria monocytogenes serovar 1/2a (strain ATCC BAA-679 / EGD-e).